Reading from the N-terminus, the 184-residue chain is UPF0302 protein OB1778 (184 aa).

Belongs to the UPF0302 family.

The chain is UPF0302 protein OB1778 from Oceanobacillus iheyensis (strain DSM 14371 / CIP 107618 / JCM 11309 / KCTC 3954 / HTE831).